Here is a 211-residue protein sequence, read N- to C-terminus: N-(5'-phosphoribosyl)anthranilate isomerase (211 aa).

This sequence belongs to the TrpF family.

It carries out the reaction N-(5-phospho-beta-D-ribosyl)anthranilate = 1-(2-carboxyphenylamino)-1-deoxy-D-ribulose 5-phosphate. Its pathway is amino-acid biosynthesis; L-tryptophan biosynthesis; L-tryptophan from chorismate: step 3/5. The sequence is that of N-(5'-phosphoribosyl)anthranilate isomerase from Chromohalobacter salexigens (strain ATCC BAA-138 / DSM 3043 / CIP 106854 / NCIMB 13768 / 1H11).